The sequence spans 400 residues: Acetylornithine aminotransferase (400 aa).

Residues 113–114 (GA) and F139 each bind pyridoxal 5'-phosphate. Position 142 (R142) interacts with N(2)-acetyl-L-ornithine. 224–227 (DEVQ) serves as a coordination point for pyridoxal 5'-phosphate. K253 carries the N6-(pyridoxal phosphate)lysine modification. S281 is a binding site for N(2)-acetyl-L-ornithine. Residue T282 participates in pyridoxal 5'-phosphate binding.

It belongs to the class-III pyridoxal-phosphate-dependent aminotransferase family. ArgD subfamily. Homodimer. It depends on pyridoxal 5'-phosphate as a cofactor.

Its subcellular location is the cytoplasm. It carries out the reaction N(2)-acetyl-L-ornithine + 2-oxoglutarate = N-acetyl-L-glutamate 5-semialdehyde + L-glutamate. Its pathway is amino-acid biosynthesis; L-arginine biosynthesis; N(2)-acetyl-L-ornithine from L-glutamate: step 4/4. The sequence is that of Acetylornithine aminotransferase from Mycobacterium bovis (strain ATCC BAA-935 / AF2122/97).